Consider the following 442-residue polypeptide: O-acetyl-L-homoserine sulfhydrylase (442 aa).

Positions 1-32 (MVGPSGESMPRNFKPETIALHGGQEPDPTTTS) are disordered. K216 bears the N6-(pyridoxal phosphate)lysine mark.

This sequence belongs to the trans-sulfuration enzymes family. Requires pyridoxal 5'-phosphate as cofactor.

It carries out the reaction O-acetyl-L-homoserine + hydrogen sulfide = L-homocysteine + acetate. It functions in the pathway amino-acid biosynthesis; L-methionine biosynthesis via de novo pathway; L-homocysteine from O-acetyl-L-homoserine: step 1/1. Feedback inhibited at very high concentrations of methionine or S-adenosylmethionine. Catalyzes the conversion of O-acetyl-L-homoserine (OAH) into homocysteine in the methionine biosynthesis pathway. Can also use O-succinyl-homoserine (OSH), although at low efficiency. The protein is O-acetyl-L-homoserine sulfhydrylase of Leptospira meyeri.